A 296-amino-acid chain; its full sequence is MSDKHINLVIVTGMSGAGKTVAIQSFEDLGYFTIDNMPPALVPKFLELIEQTNENRRVALVVDMRSRLFFKEINSTLDSIESNPSIDFRILFLDATDGELVSRYKETRRSHPLAADGRVLDGIRLERELLSPLKSMSQHVVDTTKLTPRQLRKTISDQFSEGSNQASFRIEVMSFGFKYGLPLDADLVFDVRFLPNPYYKVELREKTGLDEDVFNYVMSHPESEVFYKHLLNLIVPILPAYQKEGKSVLTVAIGCTGGQHRSVAFAHCLAESLATDWSVNESHRDQNRRKETVNRS.

Residue 13–20 (GMSGAGKT) coordinates ATP. Position 63 to 66 (63 to 66 (DMRS)) interacts with GTP.

This sequence belongs to the RapZ-like family.

Its function is as follows. Displays ATPase and GTPase activities. The sequence is that of Nucleotide-binding protein M28_Spy0517 from Streptococcus pyogenes serotype M28 (strain MGAS6180).